We begin with the raw amino-acid sequence, 532 residues long: CTP synthase (532 aa).

An amidoligase domain region spans residues 1–267 (MTKYIFVTGG…DDIVLEHLQL (267 aa)). S13 serves as a coordination point for CTP. Residue S13 coordinates UTP. 14 to 19 (SIGKGI) provides a ligand contact to ATP. L-glutamine is bound at residue Y54. D71 serves as a coordination point for ATP. Mg(2+) is bound by residues D71 and E141. CTP is bound by residues 148 to 150 (DIE), 188 to 193 (KTKPTQ), and K224. Residues 188–193 (KTKPTQ) and K224 each bind UTP. The Glutamine amidotransferase type-1 domain occupies 292–532 (RIGLVGKYVS…DFVGAALKNK (241 aa)). G354 contributes to the L-glutamine binding site. C381 functions as the Nucleophile; for glutamine hydrolysis in the catalytic mechanism. L-glutamine-binding positions include 382–385 (LGMQ), E405, and R462. Active-site residues include H507 and E509.

It belongs to the CTP synthase family. In terms of assembly, homotetramer.

It carries out the reaction UTP + L-glutamine + ATP + H2O = CTP + L-glutamate + ADP + phosphate + 2 H(+). The enzyme catalyses L-glutamine + H2O = L-glutamate + NH4(+). It catalyses the reaction UTP + NH4(+) + ATP = CTP + ADP + phosphate + 2 H(+). The protein operates within pyrimidine metabolism; CTP biosynthesis via de novo pathway; CTP from UDP: step 2/2. With respect to regulation, allosterically activated by GTP, when glutamine is the substrate; GTP has no effect on the reaction when ammonia is the substrate. The allosteric effector GTP functions by stabilizing the protein conformation that binds the tetrahedral intermediate(s) formed during glutamine hydrolysis. Inhibited by the product CTP, via allosteric rather than competitive inhibition. In terms of biological role, catalyzes the ATP-dependent amination of UTP to CTP with either L-glutamine or ammonia as the source of nitrogen. Regulates intracellular CTP levels through interactions with the four ribonucleotide triphosphates. In Listeria monocytogenes serovar 1/2a (strain ATCC BAA-679 / EGD-e), this protein is CTP synthase.